A 146-amino-acid polypeptide reads, in one-letter code: Mitochondrial DnaJ homolog 2 (146 aa).

A J domain is found at 85 to 146; sequence EALLILDISA…LERSVLLRKR (62 aa).

As to quaternary structure, interacts with PAM16/TIM16 and is recruited by the PAM complex.

The protein resides in the mitochondrion inner membrane. Functionally, plays a role in mitochondrial biogenesis and protein folding. Participates in the translocation of transit peptide-containing proteins from the inner membrane into the mitochondrial matrix in an ATP-dependent manner, probably by stimulating activity of mtHSP70 (SSC1). The sequence is that of Mitochondrial DnaJ homolog 2 (MDJ2) from Saccharomyces cerevisiae (strain ATCC 204508 / S288c) (Baker's yeast).